Consider the following 344-residue polypeptide: Holliday junction branch migration complex subunit RuvB (344 aa).

The segment at 4-184 is large ATPase domain (RuvB-L); the sequence is QDRIIDANAK…FGIVQRLEFY (181 aa). ATP-binding positions include R24, G65, K68, T69, T70, 131–133, R174, Y184, and R221; that span reads EDF. A Mg(2+)-binding site is contributed by T69. Positions 185 to 255 are small ATPAse domain (RuvB-S); it reads NIEDLTHIVE…IADLALNMLN (71 aa). The interval 258-344 is head domain (RuvB-H); that stretch reads EHGFDHMDRR…ALKQDSLPGI (87 aa). The DNA site is built by R294, R313, and R318.

It belongs to the RuvB family. Homohexamer. Forms an RuvA(8)-RuvB(12)-Holliday junction (HJ) complex. HJ DNA is sandwiched between 2 RuvA tetramers; dsDNA enters through RuvA and exits via RuvB. An RuvB hexamer assembles on each DNA strand where it exits the tetramer. Each RuvB hexamer is contacted by two RuvA subunits (via domain III) on 2 adjacent RuvB subunits; this complex drives branch migration. In the full resolvosome a probable DNA-RuvA(4)-RuvB(12)-RuvC(2) complex forms which resolves the HJ.

The protein resides in the cytoplasm. The enzyme catalyses ATP + H2O = ADP + phosphate + H(+). Functionally, the RuvA-RuvB-RuvC complex processes Holliday junction (HJ) DNA during genetic recombination and DNA repair, while the RuvA-RuvB complex plays an important role in the rescue of blocked DNA replication forks via replication fork reversal (RFR). RuvA specifically binds to HJ cruciform DNA, conferring on it an open structure. The RuvB hexamer acts as an ATP-dependent pump, pulling dsDNA into and through the RuvAB complex. RuvB forms 2 homohexamers on either side of HJ DNA bound by 1 or 2 RuvA tetramers; 4 subunits per hexamer contact DNA at a time. Coordinated motions by a converter formed by DNA-disengaged RuvB subunits stimulates ATP hydrolysis and nucleotide exchange. Immobilization of the converter enables RuvB to convert the ATP-contained energy into a lever motion, pulling 2 nucleotides of DNA out of the RuvA tetramer per ATP hydrolyzed, thus driving DNA branch migration. The RuvB motors rotate together with the DNA substrate, which together with the progressing nucleotide cycle form the mechanistic basis for DNA recombination by continuous HJ branch migration. Branch migration allows RuvC to scan DNA until it finds its consensus sequence, where it cleaves and resolves cruciform DNA. The polypeptide is Holliday junction branch migration complex subunit RuvB (Saccharophagus degradans (strain 2-40 / ATCC 43961 / DSM 17024)).